Reading from the N-terminus, the 553-residue chain is Protein PALS2 (553 aa).

2 consecutive L27 domains span residues 1 to 48 (MQQV…EDSK) and 49 to 107 (LEAV…YDSP). Positions 129 to 208 (ILGIHKKAGE…SVTLKILPSY (80 aa)) constitute a PDZ domain. The region spanning 228–297 (VRQVFVKCHF…PSQFLEEKRK (70 aa)) is the SH3 domain. The 188-residue stretch at 351-538 (RKTLVLIGAQ…AFEKLQTAIE (188 aa)) folds into the Guanylate kinase-like domain. Y513 carries the post-translational modification Phosphotyrosine.

The protein belongs to the MAGUK family. Interacts with CADM1. Interacts with the LIN7 proteins.

It localises to the membrane. This Mus musculus (Mouse) protein is Protein PALS2.